A 112-amino-acid chain; its full sequence is Putative pterin-4-alpha-carbinolamine dehydratase (112 aa).

The protein belongs to the pterin-4-alpha-carbinolamine dehydratase family.

The enzyme catalyses (4aS,6R)-4a-hydroxy-L-erythro-5,6,7,8-tetrahydrobiopterin = (6R)-L-erythro-6,7-dihydrobiopterin + H2O. This is Putative pterin-4-alpha-carbinolamine dehydratase from Shewanella halifaxensis (strain HAW-EB4).